The primary structure comprises 247 residues: Neurotrophic factor BDNF precursor form (247 aa).

An N-terminal signal peptide occupies residues 1–18; that stretch reads MTILFLTMVISYFGCMKA. A propeptide spanning residues 19–128 is cleaved from the precursor; that stretch reads APMKEANIRG…AANMSMRVRR (110 aa). N-linked (GlcNAc...) asparagine glycosylation occurs at Asn-121. Cystine bridges form between Cys-141-Cys-208, Cys-186-Cys-237, and Cys-196-Cys-239.

It belongs to the NGF-beta family. As to quaternary structure, monomers and homodimers. Binds to NTRK2/TRKB. Can form heterodimers with other neurotrophin family members, such as NTF3 and NTF4 (in vitro), but the physiological relevance of this is not clear. BDNF precursor form: interacts with the heterodimer formed by NGFR and SORCS2. Post-translationally, N-glycosylated and glycosulfated, contrary to mature BDNF. Mature BDNF is produced by proteolytic removal of the propeptide, catalyzed by a FURIN family member. In addition, the precursor form is proteolytically cleaved within the propeptide, but this is not an obligatory intermediate for the production of mature BDNF. Can be converted into mature BDNF by plasmin (PLG). In terms of tissue distribution, detected in blood plasma and in saliva (at protein level). Brain. Highly expressed in hippocampus, amygdala, cerebral cortex and cerebellum. Also expressed in heart, lung, skeletal muscle, testis, prostate and placenta.

It localises to the secreted. In terms of biological role, important signaling molecule that activates signaling cascades downstream of NTRK2. During development, promotes the survival and differentiation of selected neuronal populations of the peripheral and central nervous systems. Participates in axonal growth, pathfinding and in the modulation of dendritic growth and morphology. Major regulator of synaptic transmission and plasticity at adult synapses in many regions of the CNS. The versatility of BDNF is emphasized by its contribution to a range of adaptive neuronal responses including long-term potentiation (LTP), long-term depression (LTD), certain forms of short-term synaptic plasticity, as well as homeostatic regulation of intrinsic neuronal excitability. Important signaling molecule that activates signaling cascades downstream of NTRK2. Activates signaling cascades via the heterodimeric receptor formed by NGFR and SORCS2. Signaling via NGFR and SORCS2 plays a role in synaptic plasticity and long-term depression (LTD). Binding to NGFR and SORCS2 promotes neuronal apoptosis. Promotes neuronal growth cone collapse. This Homo sapiens (Human) protein is Neurotrophic factor BDNF precursor form.